The chain runs to 1059 residues: IQ motif-containing protein H (1059 aa).

The stretch at 6–35 forms a coiled coil; sequence KNKDEVGNILVKVQDDLRQLKKNIVQFTVQ. The tract at residues 245–267 is disordered; sequence MESAESRLLRAPPPSAASASSDN. Positions 401 to 430 constitute an IQ domain; the sequence is HQAAAVRIQTCWRRYSARTAYLIRLRSKWA.

The sequence is that of IQ motif-containing protein H (iqch) from Danio rerio (Zebrafish).